The chain runs to 358 residues: 3-dehydroquinate synthase (358 aa).

Residues 70 to 75 (DGEQFK), 104 to 108 (GVIGD), 128 to 129 (TT), Lys-141, Lys-150, and 168 to 171 (CLHT) contribute to the NAD(+) site. The Zn(2+) site is built by Glu-183, His-246, and His-263.

Belongs to the sugar phosphate cyclases superfamily. Dehydroquinate synthase family. It depends on Co(2+) as a cofactor. Requires Zn(2+) as cofactor. NAD(+) serves as cofactor.

It is found in the cytoplasm. It catalyses the reaction 7-phospho-2-dehydro-3-deoxy-D-arabino-heptonate = 3-dehydroquinate + phosphate. The protein operates within metabolic intermediate biosynthesis; chorismate biosynthesis; chorismate from D-erythrose 4-phosphate and phosphoenolpyruvate: step 2/7. Functionally, catalyzes the conversion of 3-deoxy-D-arabino-heptulosonate 7-phosphate (DAHP) to dehydroquinate (DHQ). The sequence is that of 3-dehydroquinate synthase from Shewanella baltica (strain OS195).